Here is a 122-residue protein sequence, read N- to C-terminus: Large ribosomal subunit protein uL14 (122 aa).

It belongs to the universal ribosomal protein uL14 family. As to quaternary structure, part of the 50S ribosomal subunit. Forms a cluster with proteins L3 and L19. In the 70S ribosome, L14 and L19 interact and together make contacts with the 16S rRNA in bridges B5 and B8.

Functionally, binds to 23S rRNA. Forms part of two intersubunit bridges in the 70S ribosome. This chain is Large ribosomal subunit protein uL14, found in Pelagibacter ubique (strain HTCC1062).